A 515-amino-acid chain; its full sequence is Forkhead box protein H1 (515 aa).

The segment at 55–103 (YREGGTWSPDRGSMHGLSPGTQEGSCTQAEGTKDSLGGDETLSRKSKKK) is disordered. Residues 73-84 (PGTQEGSCTQAE) are compositionally biased toward polar residues. Positions 110 to 206 (KPPYSYLAMI…MKLQNTALTR (97 aa)) form a DNA-binding region, fork-head. The interval 307–399 (YPQSKPTRNG…EPPKKMPLLS (93 aa)) is disordered. Low complexity predominate over residues 322 to 339 (SASHSTYSSSSSSISTIS). Residues 375-388 (STPSSDTDAGNYSP) show a composition bias toward polar residues. The segment at 377–503 (PSSDTDAGNY…PSFLGQCLGS (127 aa)) is SMAD-interaction domain (SID). Residues 402-406 (LPTSY) carry the Fast/FoxH1 motif 1 (FM1) motif. Residues 412–418 (PNVVAPP) carry the Fast/FoxH1 motif 2 (FM2) motif. Residues 467–488 (LDNMLKTVPPNKSVFDVLTSHP) carry the SMAD-interaction motif (SIM) motif.

As to quaternary structure, ARF1 contains 2 smad2s, 1 smad4 and 1 foxh1/fast-1 protein. Interaction with smad4 is most likely indirect through interaction with the MH2 domain of smad2. Binds to the MH2 domain of smad3, which can incorporate into the ARF1 complex. The ARF1 and ARF2 complexes are activated by distinct TGF-beta family members; formation of ARF1 is promoted by activin. Interacts (via Fork-head domain) with gtf2ird1/wbscr11 (via repeats 4-5).

The protein localises to the nucleus. In terms of biological role, transcriptional activator. Recognizes and binds to the DNA sequence 5'-TGT[GT][GT]ATT-3'. Upon TGF-beta induction, forms a transcriptionally active complex with smad2 and smad4 called activin-responsive factor 1 (ARF1), which binds a site on the mix-B/mix.2 promoter called the activin response element (ARE). Binds to activated smads and the ARE with much lower affinity than fast3. Necessary for the first steps in mesoderm specification, directly inducing mesodermal genes. Acts with fast3 to control the convergent extension movements of gastrulation. Binds to the proximal element (PE) of the gsc gene and cooperates with gtf2ird1/wbscr11 and SMAD proteins to regulate gsc transcription. This chain is Forkhead box protein H1, found in Xenopus tropicalis (Western clawed frog).